A 311-amino-acid chain; its full sequence is Mediator of RNA polymerase II transcription subunit 27 (311 aa).

S132 bears the Phosphoserine mark. K134 carries the post-translational modification N6-methyllysine.

Belongs to the Mediator complex subunit 27 family. Component of the Mediator complex, which is composed of MED1, MED4, MED6, MED7, MED8, MED9, MED10, MED11, MED12, MED13, MED13L, MED14, MED15, MED16, MED17, MED18, MED19, MED20, MED21, MED22, MED23, MED24, MED25, MED26, MED27, MED29, MED30, MED31, CCNC, CDK8 and CDC2L6/CDK11. The MED12, MED13, CCNC and CDK8 subunits form a distinct module termed the CDK8 module. Mediator containing the CDK8 module is less active than Mediator lacking this module in supporting transcriptional activation. Individual preparations of the Mediator complex lacking one or more distinct subunits have been variously termed ARC, CRSP, DRIP, PC2, SMCC and TRAP.

It localises to the nucleus. Its function is as follows. Component of the Mediator complex, a coactivator involved in the regulated transcription of nearly all RNA polymerase II-dependent genes. Mediator functions as a bridge to convey information from gene-specific regulatory proteins to the basal RNA polymerase II transcription machinery. Mediator is recruited to promoters by direct interactions with regulatory proteins and serves as a scaffold for the assembly of a functional preinitiation complex with RNA polymerase II and the general transcription factors. This chain is Mediator of RNA polymerase II transcription subunit 27 (MED27), found in Homo sapiens (Human).